A 232-amino-acid chain; its full sequence is Orotidine 5'-phosphate decarboxylase (232 aa).

Substrate is bound by residues Asp12, Lys34, 61–70 (DMKLLDIDNT), Thr116, Arg177, Gln186, Gly206, and Arg207. The active-site Proton donor is the Lys63.

Belongs to the OMP decarboxylase family. Type 1 subfamily. Homodimer.

The enzyme catalyses orotidine 5'-phosphate + H(+) = UMP + CO2. It functions in the pathway pyrimidine metabolism; UMP biosynthesis via de novo pathway; UMP from orotate: step 2/2. Its function is as follows. Catalyzes the decarboxylation of orotidine 5'-monophosphate (OMP) to uridine 5'-monophosphate (UMP). This is Orotidine 5'-phosphate decarboxylase from Sinorhizobium medicae (strain WSM419) (Ensifer medicae).